A 340-amino-acid chain; its full sequence is Glycerol-3-phosphate dehydrogenase [NAD(P)+] (340 aa).

NADPH contacts are provided by Ser-13, Tyr-14, and Lys-108. Sn-glycerol 3-phosphate contacts are provided by Lys-108, Gly-137, and Thr-139. Ala-141 provides a ligand contact to NADPH. The sn-glycerol 3-phosphate site is built by Lys-193, Asp-246, Ser-256, Arg-257, and Asn-258. Residue Lys-193 is the Proton acceptor of the active site. Arg-257 is an NADPH binding site. 2 residues coordinate NADPH: Ile-281 and Glu-283.

The protein belongs to the NAD-dependent glycerol-3-phosphate dehydrogenase family.

It localises to the cytoplasm. It catalyses the reaction sn-glycerol 3-phosphate + NAD(+) = dihydroxyacetone phosphate + NADH + H(+). It carries out the reaction sn-glycerol 3-phosphate + NADP(+) = dihydroxyacetone phosphate + NADPH + H(+). Its pathway is membrane lipid metabolism; glycerophospholipid metabolism. Catalyzes the reduction of the glycolytic intermediate dihydroxyacetone phosphate (DHAP) to sn-glycerol 3-phosphate (G3P), the key precursor for phospholipid synthesis. The protein is Glycerol-3-phosphate dehydrogenase [NAD(P)+] of Bartonella quintana (strain Toulouse) (Rochalimaea quintana).